Reading from the N-terminus, the 275-residue chain is Urease accessory protein UreD (275 aa).

Belongs to the UreD family. UreD, UreF and UreG form a complex that acts as a GTP-hydrolysis-dependent molecular chaperone, activating the urease apoprotein by helping to assemble the nickel containing metallocenter of UreC. The UreE protein probably delivers the nickel.

It localises to the cytoplasm. Required for maturation of urease via the functional incorporation of the urease nickel metallocenter. In Cereibacter sphaeroides (strain ATCC 17029 / ATH 2.4.9) (Rhodobacter sphaeroides), this protein is Urease accessory protein UreD.